The following is a 598-amino-acid chain: Sulfoacetaldehyde acetyltransferase (598 aa).

It belongs to the TPP enzyme family. As to quaternary structure, homotetramer. Requires Mg(2+) as cofactor. It depends on thiamine diphosphate as a cofactor.

It is found in the cytoplasm. It carries out the reaction acetyl phosphate + sulfite + H(+) = sulfoacetaldehyde + phosphate. The protein operates within organosulfur degradation; taurine degradation via aerobic pathway; acetyl phosphate and sulfite from taurine: step 2/2. This chain is Sulfoacetaldehyde acetyltransferase, found in Castellaniella defragrans (Alcaligenes defragrans).